We begin with the raw amino-acid sequence, 324 residues long: Lipoyl synthase (324 aa).

The [4Fe-4S] cluster site is built by cysteine 72, cysteine 77, cysteine 83, cysteine 98, cysteine 102, cysteine 105, and serine 313. The Radical SAM core domain maps to 84 to 302; it reads FRFGTASFMI…AQEGKKMGFL (219 aa).

The protein belongs to the radical SAM superfamily. Lipoyl synthase family. Requires [4Fe-4S] cluster as cofactor.

The protein resides in the cytoplasm. The catalysed reaction is [[Fe-S] cluster scaffold protein carrying a second [4Fe-4S](2+) cluster] + N(6)-octanoyl-L-lysyl-[protein] + 2 oxidized [2Fe-2S]-[ferredoxin] + 2 S-adenosyl-L-methionine + 4 H(+) = [[Fe-S] cluster scaffold protein] + N(6)-[(R)-dihydrolipoyl]-L-lysyl-[protein] + 4 Fe(3+) + 2 hydrogen sulfide + 2 5'-deoxyadenosine + 2 L-methionine + 2 reduced [2Fe-2S]-[ferredoxin]. Its pathway is protein modification; protein lipoylation via endogenous pathway; protein N(6)-(lipoyl)lysine from octanoyl-[acyl-carrier-protein]: step 2/2. Functionally, catalyzes the radical-mediated insertion of two sulfur atoms into the C-6 and C-8 positions of the octanoyl moiety bound to the lipoyl domains of lipoate-dependent enzymes, thereby converting the octanoylated domains into lipoylated derivatives. This chain is Lipoyl synthase, found in Dichelobacter nodosus (strain VCS1703A).